The primary structure comprises 601 residues: MEFKVIAEYFDKLEKISSRLQLTALLADLLSKSDKAIIDKVVYIIQGKLWPDFLGYPELGIGEKFLIKAISIATNTDENSVENLYKSIGDLGEVARRLKSKQQSTGILGFLGTSSKESLKVDKVYSTLSKVALTTGEGSRDLKIRLLAGLLKKADPLEAKFLVRFVEGRLRVGIGDATVLDAMAIAFGGGQSASEIVERAYNLRADLGNIAKIIVEKGIEALKTLKPEVGIPIRPMLAERLSNPEEILKKVGGSALVDYKYDGERAQIHKKDDKIFIFSRRLENITSQYPDVVEYISKYTEGKEFIIEGEIVAVDPESGEIRSFQELMHRKRKSDIYEAIKEYPVNVFLFDLMYYEDVDYTTKPLEVRRKLLESIVKPNDYVKIAHHIQVNNVEDLKSFFYRAISEGGEGVMVKAIGKDAIYQAGARGWLWIKLKRDYQSEMADTVDLVVVGGFYGKGKRGGKISSLLMAAYNPKTDTFESVCKVASGFSDEQLDELQKKLMEIKRDIKHPRVNSKMEPDIWVEPVYVAEIIGAEITISPLHTCCQDVVEKDAGLSIRFPRFIRWRDDKSPEDATTTDEILEMYNKQPKKKIESPPIDESV.

ATP is bound at residue D258. Catalysis depends on K260, which acts as the N6-AMP-lysine intermediate. 6 residues coordinate ATP: R265, R280, E310, F350, R427, and K433. The segment at 568-601 (DKSPEDATTTDEILEMYNKQPKKKIESPPIDESV) is disordered.

The protein belongs to the ATP-dependent DNA ligase family. Mg(2+) is required as a cofactor.

It catalyses the reaction ATP + (deoxyribonucleotide)n-3'-hydroxyl + 5'-phospho-(deoxyribonucleotide)m = (deoxyribonucleotide)n+m + AMP + diphosphate.. DNA ligase that seals nicks in double-stranded DNA during DNA replication, DNA recombination and DNA repair. In Saccharolobus islandicus (strain Y.N.15.51 / Yellowstone #2) (Sulfolobus islandicus), this protein is DNA ligase.